The sequence spans 283 residues: NFU1 iron-sulfur cluster scaffold homolog, mitochondrial (283 aa).

The N-terminal 30 residues, 1–30, are a transit peptide targeting the mitochondrion; the sequence is MSKFLSQAALNTLRNTRLGSRQLVRSFAGI. Positions 182–250 are nifU; the sequence is IKELLDTRIR…IPEVESVEQV (69 aa). Residues C219 and C222 each contribute to the [4Fe-4S] cluster site.

The protein belongs to the NifU family.

The protein localises to the mitochondrion. Molecular scaffold for [Fe-S] cluster assembly of mitochondrial iron-sulfur proteins. The sequence is that of NFU1 iron-sulfur cluster scaffold homolog, mitochondrial from Drosophila erecta (Fruit fly).